The chain runs to 130 residues: MSGRGKQGGKARAKAKSRSSRAGLQFPVGRVHRLLRKGNYAERVGAGAPVYMAAVLEYLTAEILELAGNAARDNKKTRIIPRHLQLAVRNDEELNKLLGGVTIAQGGVLPNIQAVLLPKKTESHKPGKNK.

A disordered region spans residues 1-22 (MSGRGKQGGKARAKAKSRSSRA). N-acetylserine is present on serine 2. Position 2 is a phosphoserine; by RPS6KA5 (serine 2). Arginine 4 is subject to Citrulline; alternate. Arginine 4 bears the Symmetric dimethylarginine; by PRMT5; alternate mark. N6-(2-hydroxyisobutyryl)lysine; alternate is present on residues lysine 6 and lysine 10. Lysine 6 is modified (N6-(beta-hydroxybutyryl)lysine; alternate). Residues 7-19 (QGGKARAKAKSRS) show a composition bias toward basic residues. Lysine 10 is modified (N6-lactoyllysine; alternate). Residue lysine 10 is modified to N6-succinyllysine; alternate. Glycyl lysine isopeptide (Lys-Gly) (interchain with G-Cter in ubiquitin) cross-links involve residues lysine 14 and lysine 16. Residue lysine 37 is modified to N6-(2-hydroxyisobutyryl)lysine; alternate. Lysine 37 is modified (N6-(beta-hydroxybutyryl)lysine; alternate). Lysine 37 is modified (N6-crotonyllysine; alternate). Residues lysine 75 and lysine 76 each carry the N6-(2-hydroxyisobutyryl)lysine modification. An N6-(2-hydroxyisobutyryl)lysine; alternate modification is found at lysine 96. Lysine 96 is modified (N6-succinyllysine; alternate). Position 96 is an N6-glutaryllysine; alternate (lysine 96). Glutamine 105 carries the N5-methylglutamine modification. The residue at position 119 (lysine 119) is an N6-(2-hydroxyisobutyryl)lysine; alternate. An N6-crotonyllysine; alternate mark is found at lysine 119 and lysine 120. Residues lysine 119 and lysine 120 each carry the N6-glutaryllysine; alternate modification. Lysine 120 carries the post-translational modification N6-(beta-hydroxybutyryl)lysine; alternate. Residue lysine 120 forms a Glycyl lysine isopeptide (Lys-Gly) (interchain with G-Cter in ubiquitin); alternate linkage. Phosphothreonine; by DCAF1 is present on threonine 121.

This sequence belongs to the histone H2A family. The nucleosome is a histone octamer containing two molecules each of H2A, H2B, H3 and H4 assembled in one H3-H4 heterotetramer and two H2A-H2B heterodimers. The octamer wraps approximately 147 bp of DNA. Deiminated on Arg-4 in granulocytes upon calcium entry. Post-translationally, monoubiquitination of Lys-120 (H2AK119Ub) by RING1, TRIM37 and RNF2/RING2 complex gives a specific tag for epigenetic transcriptional repression and participates in X chromosome inactivation of female mammals. It is involved in the initiation of both imprinted and random X inactivation. Ubiquitinated H2A is enriched in inactive X chromosome chromatin. Ubiquitination of H2A functions downstream of methylation of 'Lys-27' of histone H3 (H3K27me). H2AK119Ub by RNF2/RING2 can also be induced by ultraviolet and may be involved in DNA repair. Following DNA double-strand breaks (DSBs), it is ubiquitinated through 'Lys-63' linkage of ubiquitin moieties by the E2 ligase UBE2N and the E3 ligases RNF8 and RNF168, leading to the recruitment of repair proteins to sites of DNA damage. Ubiquitination at Lys-14 and Lys-16 (H2AK13Ub and H2AK15Ub, respectively) in response to DNA damage is initiated by RNF168 that mediates monoubiquitination at these 2 sites, and 'Lys-63'-linked ubiquitin are then conjugated to monoubiquitin; RNF8 is able to extend 'Lys-63'-linked ubiquitin chains in vitro. Deubiquitinated by USP51 at Lys-14 and Lys-16 (H2AK13Ub and H2AK15Ub, respectively) after damaged DNA is repaired. H2AK119Ub and ionizing radiation-induced 'Lys-63'-linked ubiquitination (H2AK13Ub and H2AK15Ub) are distinct events. In terms of processing, phosphorylation on Ser-2 (H2AS1ph) is enhanced during mitosis. Phosphorylation on Ser-2 by RPS6KA5/MSK1 directly represses transcription. Acetylation of H3 inhibits Ser-2 phosphorylation by RPS6KA5/MSK1. Phosphorylation at Thr-121 (H2AT120ph) by DCAF1 is present in the regulatory region of many tumor suppresor genes and down-regulates their transcription. Symmetric dimethylation on Arg-4 by the PRDM1/PRMT5 complex may play a crucial role in the germ-cell lineage. Post-translationally, glutamine methylation at Gln-105 (H2AQ104me) by FBL is specifically dedicated to polymerase I. It is present at 35S ribosomal DNA locus and impairs binding of the FACT complex. In terms of processing, crotonylation (Kcr) is specifically present in male germ cells and marks testis-specific genes in post-meiotic cells, including X-linked genes that escape sex chromosome inactivation in haploid cells. Crotonylation marks active promoters and enhancers and confers resistance to transcriptional repressors. It is also associated with post-meiotically activated genes on autosomes. Hydroxybutyrylation of histones is induced by starvation. Post-translationally, lactylated in macrophages by EP300/P300 by using lactoyl-CoA directly derived from endogenous or exogenous lactate, leading to stimulates gene transcription.

It is found in the nucleus. Its subcellular location is the chromosome. Core component of nucleosome. Nucleosomes wrap and compact DNA into chromatin, limiting DNA accessibility to the cellular machineries which require DNA as a template. Histones thereby play a central role in transcription regulation, DNA repair, DNA replication and chromosomal stability. DNA accessibility is regulated via a complex set of post-translational modifications of histones, also called histone code, and nucleosome remodeling. This Mus musculus (Mouse) protein is Histone H2A type 2-B.